The sequence spans 236 residues: MTTPANTTQAVGSTTSTTTTTAGATPANSGLFTIPDGDFFSTAKVVVASNAVATNEDLTKIQKIWKDMKIPSDTMAQAAWDLVRHCADVGSSAQTEMIGTGPYSNGVSRARLAAAIKEVCKLRQFCRKYAPVVWNWMLTNNSPPANWQAQGFKPEHKFAAFDFFDGVTNPAAITPKEGLIRPPFEAEMNAAQTATFVKITKARAQSNDFASLDAAVTRGRITGTTAAEAVISLPPP.

Residues 1-27 (MTTPANTTQAVGSTTSTTTTTAGATPA) form a disordered region. The span at 7-27 (TTQAVGSTTSTTTTTAGATPA) shows a compositional bias: low complexity.

It belongs to the potexvirus capsid protein family.

It localises to the virion. Required for genome encapsidation. Forms ribonucleoprotein complexes along with TGB1 helicase and viral RNA. In Brassica campestris (Field mustard), this protein is Coat protein.